The chain runs to 80 residues: UPF0248 protein YG5714_2801 (80 aa).

The protein belongs to the UPF0248 family.

This is UPF0248 protein YG5714_2801 from Saccharolobus islandicus (strain Y.G.57.14 / Yellowstone #1) (Sulfolobus islandicus).